The chain runs to 174 residues: Ly6/PLAUR domain-containing protein 6 (174 aa).

The first 22 residues, 1–22 (MEPWPLMAWGLMLTAITGWIKA), serve as a signal peptide directing secretion. Residues 47–141 (FKCFTCEDAP…PRNETDAIFS (95 aa)) form the UPAR/Ly6 domain. 6 cysteine pairs are disulfide-bonded: Cys-49-Cys-77, Cys-52-Cys-61, Cys-70-Cys-96, Cys-102-Cys-121, Cys-107-Cys-118, and Cys-122-Cys-127. N-linked (GlcNAc...) asparagine glycans are attached at residues Asn-134 and Asn-147. Ser-149 carries GPI-anchor amidated serine lipidation. A propeptide spans 150 to 174 (AQSTQTLPLLLLSVSITSLMLHSIN) (removed in mature form).

In terms of assembly, interacts with fzd8 and lrp6.

Its subcellular location is the cell membrane. It is found in the membrane raft. Acts as an important regulator of embryogenesis through its enhancement of Wnt/beta-catenin signaling. Positively regulates Wnt/beta-catenin signaling by ensuring phosphorylation of lrp6 specifically in plasma membrane rafts and its subsequent internalization into signaling-competent vesicles. Essential for the wnt8-mediated patterning of the mesoderm and neuroectoderm during gastrulation. In Danio rerio (Zebrafish), this protein is Ly6/PLAUR domain-containing protein 6 (lypd6).